We begin with the raw amino-acid sequence, 138 residues long: MRTLWIVAVLLLGVEGSLVQFETLIMKVAKRSGLLWYSAYGCYCGWGGHGRPQDATDRCCFVHDCCYGKATDCNPKTVSYTYSEENGEIVCGGDDPCGTQICECDKAAAICFRDNIPSYDNKYWLFPPKNCREEPEPC.

A signal peptide spans 1–16; sequence MRTLWIVAVLLLGVEG. 7 cysteine pairs are disulfide-bonded: C42-C131, C44-C60, C59-C111, C65-C138, C66-C104, C73-C97, and C91-C102. Y43, G45, and G47 together coordinate Ca(2+). Residue H63 is part of the active site. D64 serves as a coordination point for Ca(2+). The active site involves D105.

Belongs to the phospholipase A2 family. Group II subfamily. D49 sub-subfamily. Dimer. The cofactor is Ca(2+). As to expression, expressed by the venom gland.

It localises to the secreted. The catalysed reaction is a 1,2-diacyl-sn-glycero-3-phosphocholine + H2O = a 1-acyl-sn-glycero-3-phosphocholine + a fatty acid + H(+). Its function is as follows. PLA2 catalyzes the calcium-dependent hydrolysis of the 2-acyl groups in 3-sn-phosphoglycerides. In Crotalus adamanteus (Eastern diamondback rattlesnake), this protein is Acidic phospholipase A2 beta.